Reading from the N-terminus, the 144-residue chain is Nucleoside diphosphate kinase (144 aa).

Residues K11, F59, R87, T93, R104, and N114 each coordinate ATP. The active-site Pros-phosphohistidine intermediate is the H117.

It belongs to the NDK family. Homotetramer. Mg(2+) serves as cofactor.

The protein resides in the cytoplasm. It carries out the reaction a 2'-deoxyribonucleoside 5'-diphosphate + ATP = a 2'-deoxyribonucleoside 5'-triphosphate + ADP. The catalysed reaction is a ribonucleoside 5'-diphosphate + ATP = a ribonucleoside 5'-triphosphate + ADP. Major role in the synthesis of nucleoside triphosphates other than ATP. The ATP gamma phosphate is transferred to the NDP beta phosphate via a ping-pong mechanism, using a phosphorylated active-site intermediate. The sequence is that of Nucleoside diphosphate kinase from Psychromonas ingrahamii (strain DSM 17664 / CCUG 51855 / 37).